The following is a 3373-amino-acid chain: MVFEGLVSDVLSRVLGEYVKNLNKDQLKIGIFGGSVQLQNLELKEDALANLPINLPITVKKGFLGKLDLKVPWKDLKSKPVIINIDCIYALAVPQTQNYKYDEKEEAKKQAELKKKKLENYEWIKSIKDAEENEISSLQSEKSDSFTDRLVTKIIDNLQIVINKVHIRFENKNDIGKLYALGITLDKLSIQSTDEFWIPSFVDSSKSKFIKKLALMDSLGFYIDDNADSLQNLKLDEFTKAFTSLIPSSASFSLLSKYIIKPISSQLKLNINKSDIIEKSIPKILVECVMSQITCTLSSGQYQNILSILNFTNEYLRDIKYLKFRPIVKVSENPKLWWRYVGQVIVEQIREKRFSRSWEFIAQRRRARLAYIPLFKRNIPKVDWLQPLNKHELEQLNQLEERLSFEDIVYFRSLAYAEIKKETEKNKIRKQFLDSKRQERGFFQNIFNTKKDEDEKAAPKIQLSSEERDELYKTIEYNDVVSASEEPPDWVKIIGNFEIKGFAIQLVEANQVFIEALYTGLSLKFEQRNEGIKVMAGIHLFEVYDQFTKRTHFPKIIASVPTKGTGTFASVIVDTRPPDKNLDLSVELNMDPLNIIVTKPLIMKVVDFFHDPNLDITNISNRAGAHLEDIKEQAKMQLQDAIDNHKVLGLAVNIHAPVIFIPEDVINERSNILIVDLGKLVVRSDTSAFVKGSNKLAGSTSEIDLYDKFNVSFESIQVLLSDDLKSAISTGDKKPPTIGGVNDKQGHPLKHHNSIIKKFDIQLKIFSSIQQNNLTMTKLKIKGELPKFDFYLSDKKFKQLLTILNAITADIPVTSGKPKATITPINDSNSPSSVSPKLISTSPHSFSSSSAPVDVNSSNDLKKSKENIELLLNAKLVEAEFEIKSISLTLSNNQSDLIRVVFSDINVGFQQRTFDMSGTFKLSSLEIEDCFTKNTLNKLATSNPPHADRSLGKDSLVQMHFKQIQTASPEFNKIDMSIDLKIHSFYLVINPSTIYQLLKLAKSLQKDPENIDQISKAYPRLLSRNKVVPINSSEGGGTAATSPNAHLSSPNQQSPNQQSPNQQSPQIVSRKIITGTGSNSKPVGPDEKVVSSKTASGTTTRRVIIRSVRHVPKKKGPTEFVSMKFSVHINSLGLALNQDNNELLGIFTINNVSTDVSMFKDNRMLVQGRLGSIILDDLTPTISNYKQIIIPKNTSGDMLDFKYETFSMTLSNYAGYDASVNANVKSILFNANVGFLIHLQNYFLGGMLDPILKQDDSNNNNKSIEKSKSIDSKLNEQQSSSSSTSTPRSDDNHEKSERELDLEKNKKLLTSLQQNTNKHIPKMKLDIVVETPVLVIPQATRSKNSLIMELGKIIISNGWQYHDKTMAPMENMKIHLQDANITILSDNRSSYFLEKLTIDLGISKFLVPNTDPEVEDQTIDLSISHFAFYLDENQYRFFLGLSQNVQKELDLANKEVQEIKKLSNMGDPFEMGRITSNDMQYFTEQEVIQKMGKVLLRIHLVLDYVSFKISSLDAQGEIAHFIVRGIDVDVKNTDKNKTNIQLSMKSILLSDTRSNSTNIFKNLLENKVNTESVAPFLQVGYIRDNLLGDQYINVNINNTCLFLSPTPLLMISEFFMVPLSEQHDTNNMDVDLDLDLESLESELNSLMDPSIEKDDNDLQQQQQQSSSSSFIPSQQQQQQKVRSQSIIGQNRSRTSSIGGKESKTISSSISNNSLSSYPQEAGMEDEEEKEIFRSPTITFTATLVPSVTLVEDETLSTTRCLMLKTRVGVQFRRDPHGIENATVVIENTKVNIYKPSSTESENQGSRPIQILKPIEMITIKYIKENLTSTEWKQDIGISCTAMKVFFSYDDVKAILKILNNITTNLQKQQEQQKKRQLSFDNMASSSTSLPSLNKSTNSFQTSTSGNSNSGKKDEELFTNNEKLRFSCPNVSVLFINESPEMYIPIIELFFADIEASAMNWSTDLESKASMSIKGDYFNETNMKFEPVIEDWSFSVDLKKNRTGKIKGSFLATRELLNINVSHSLLQTISSAMIHVEKIDQMDAANLSSSLNASNLTTSTGSNNSSTSGSGLVQSFNGPSVLNKYLPGGEKNDSKISFHSHWISNQTGVTLEYHIPKVDSEMFQLTESSEPVSLPMKISKSRDATMGEHLNIELFIQGSKISNLSMDAVGYRIYRIGSTNEFITCEVRLRPDGSKCCYIKSMDQFENNTSLNLELKCQENGSPFSIAKHSKFSLPILVSKDLCKFWIKLENSPYWSDPIDIYKLPDHENSKLFKLQTVDKVGMFVSLVHKTIANRNCDRFNNTFKFFPPIQIENILPYPFKLSIPGTTIDKVNMGSGEKIDCHYYQPGSNLVAIVSELENFPETKHTLVSGDATSPTFTKTFKLQQNNREISLDIERTELIKGVRTLSFYCQYWLVNNSLLPIEVKLSDNQVLLVPPNLPDQLPRPPVLYSNNTIRARIPLQAEQPMNKSFCEKFPISAVGNPNTIFLTNPTRTYELSYKVDFCPNERFRLSKTVTFVPKNVICNDLPFPILVAQCVSTIDGIDKMALNFSGSGLSSSSGSNGKGVSNPVRLLGELRLDPGEYKPFHWEENVENKKISIRPITNEKNPQEWRWSGGFFVDSISDYVVKSRNTERPDHDSLLFHVNIKEKQGTHFIRIPLSSKESPPYIIQNDTQFKISFFQRDSPENIDYIEPKEKLCYGWDEPSAEYVLSVAVEGKTLKKRINVNKIKGYKLQHERTDLYITITIDGPSRVLLFSTNEKKFRSIKAWTDNKAVNLSQSQSEYHFNIRCSGIGCSIIDKTPKELAYISMKDFLIIATQSSIENTVEVKLAELQIDNQLIKTDFPVLIHTVSPDKEHRKDFLHAVIIKSTIDNIDYFRYFSTLIQEMTIELEDHWIKEVLDFVDSIPSFGRGNNASNNNNNNGMTSSQMRQSGSGLDSLTSTLYNAVSIEPPTSDSSTIKMVYFALLVLNPIKINLTLALQNDGLIKSNHKILSLVEGLGLSLTRLDRAPITLQGLLMEHPFTSRSTIIDKIKTSYIQQALRQFYNILGSVDFLGNPVGLFRNFGTGVHDFFVEPAQGLVKSPADFTKGLAKGTSSFVKNSVFGTFNTLSKLTGTLGTGVATLSFDEKYLQERKLHQARKPSHVGEGLAMGGIGLGRGILQGITGIVTKPVEGAKKGGFAGFAKGLAQGVVGVAVKPTTAVIDLATKTTEGIKNTTNLQSQAERVRPPRCFSHDNVLRPFDEVESEGWFLLKTAHKGKHASDSYIWHHIINQECTIIISDHRIILSKSKKNFLHSSFLFQIPFKFIKSNEMVDDGVLLEFDPPQNLGLLDRDVKSKVIPVDDPNVNMLLNMKLSHALKKFHDNNPNLSNSSSIKY.

The 117-residue stretch at 3 to 119 (FEGLVSDVLS…QAELKKKKLE (117 aa)) folds into the Chorein N-terminal domain. Disordered regions lie at residues 818-858 (PKAT…VNSS), 1028-1096 (VPIN…KTAS), 1259-1304 (NNNK…DLEK), 1648-1729 (DPSI…EEEK), and 1872-1913 (QKKR…GKKD). Over residues 823–839 (TPINDSNSPSSVSPKLI) the composition is skewed to polar residues. Composition is skewed to low complexity over residues 840 to 858 (STSPHSFSSSSAPVDVNSS) and 1048 to 1066 (SSPNQQSPNQQSPNQQSPQ). Composition is skewed to basic and acidic residues over residues 1263 to 1274 (SIEKSKSIDSKL) and 1288 to 1304 (RSDDNHEKSERELDLEK). Low complexity-rich tracts occupy residues 1659-1685 (QQQQQQSSSSSFIPSQQQQQQKVRSQS), 1695-1716 (SSIGGKESKTISSSISNNSLSS), and 1884-1898 (SSSTSLPSLNKSTNS). A compositionally biased stretch (polar residues) spans 1899-1909 (FQTSTSGNSNS). An SHR-BD domain is found at 2405-2706 (TLSFYCQYWL…CYGWDEPSAE (302 aa)). The disordered stretch occupies residues 2909 to 2933 (RGNNASNNNNNNGMTSSQMRQSGSG). Residues 2911–2920 (NNASNNNNNN) are compositionally biased toward low complexity.

This sequence belongs to the VPS13 family.

It is found in the membrane. Functionally, mediates the transfer of lipids between membranes at organelle contact sites. The sequence is that of Intermembrane lipid transfer protein vps13A (vps13A) from Dictyostelium discoideum (Social amoeba).